An 845-amino-acid chain; its full sequence is Envelope glycoprotein gp160 (845 aa).

The N-terminal stretch at 1 to 28 (METQRNYPSLWRWGTLILGMLLICSAAQ) is a signal peptide. The Extracellular portion of the chain corresponds to 29–673 (NLWVTVYYGV…ISHWLWYIKI (645 aa)). Cys50 and Cys70 are joined by a disulfide. Asn84, Asn126, Asn132, Asn133, Asn136, Asn149, Asn153, Asn179, Asn180, Asn190, Asn223, Asn227, Asn234, Asn255, Asn269, Asn286, Asn294, Asn324, Asn331, and Asn347 each carry an N-linked (GlcNAc...) asparagine; by host glycan. Cystine bridges form between Cys115/Cys198, Cys122/Cys189, Cys127/Cys150, Cys211/Cys240, and Cys221/Cys232. The segment at 127 to 149 (CTNVRNNTSNSTSSMEAGGELTN) is V1. A V2 region spans residues 150–189 (CSFNVTTVLRDKQQKVHALFYRLDVVPIDNNSTQYRLINC). The tract at residues 289–322 (CTRPNNNTRTSIHLGPGRAFYATGDIIGDIRQAH) is V3. A disulfide bond links Cys289 and Cys323. Positions 355–365 (NSGGDMEVRTH) are CD4-binding loop. Cystine bridges form between Cys369/Cys434 and Cys376/Cys407. A V4 region spans residues 376–407 (CNTSGLFNSSWEMHTNYTSNDTKGNENITLPC). N-linked (GlcNAc...) asparagine; by host glycosylation is found at Asn377, Asn383, Asn391, Asn395, Asn402, Asn437, Asn449, and Asn454. 2 V5 regions span residues 450-460 (ASAENYTFRPG) and 452-460 (AENYTFRPG). The fusion peptide stretch occupies residues 501-521 (AVGMGASFLGFLGAAGSTMGA). The segment at 563-581 (KQLQARVLAVERYLRDQQL) is immunosuppression. Cys587 and Cys593 are joined by a disulfide. N-linked (GlcNAc...) asparagine; by host glycans are attached at residues Asn600, Asn605, Asn614, and Asn626. A coiled-coil region spans residues 622 to 656 (KQISNYTEEIYRLLEVSQTQQEKNEQDLLALDKWA). The interval 651–672 (ALDKWASLWTWFDISHWLWYIK) is MPER; binding to GalCer. The helical transmembrane segment at 674-694 (FIMIVGGLIGLRIIFAVLSIV) threads the bilayer. The Cytoplasmic portion of the chain corresponds to 695–845 (NRVRQGYSPL…IRQGFERSLL (151 aa)). A YXXL motif; contains endocytosis signal motif is present at residues 701 to 704 (YSPL). Positions 708 to 731 (TLVPNPRGPDRPEGTEEGGGEQDR) are disordered. The short motif at 844-845 (LL) is the Di-leucine internalization motif element.

It belongs to the HIV-1 env protein family. The mature envelope protein (Env) consists of a homotrimer of non-covalently associated gp120-gp41 heterodimers. The resulting complex protrudes from the virus surface as a spike. There seems to be as few as 10 spikes on the average virion. Interacts with host CD4, CCR5 and CXCR4. Gp120 also interacts with the C-type lectins CD209/DC-SIGN and CLEC4M/DC-SIGNR (collectively referred to as DC-SIGN(R)). Gp120 and gp41 interact with GalCer. Gp120 interacts with host ITGA4/ITGB7 complex; on CD4+ T-cells, this interaction results in rapid activation of integrin ITGAL/LFA-1, which facilitates efficient cell-to-cell spreading of HIV-1. Gp120 interacts with cell-associated heparan sulfate; this interaction increases virus infectivity on permissive cells and may be involved in infection of CD4- cells. As to quaternary structure, the mature envelope protein (Env) consists of a homotrimer of non-covalently associated gp120-gp41 heterodimers. The resulting complex protrudes from the virus surface as a spike. There seems to be as few as 10 spikes on the average virion. Post-translationally, highly glycosylated by host. The high number of glycan on the protein is reffered to as 'glycan shield' because it contributes to hide protein sequence from adaptive immune system. Palmitoylation of the transmembrane protein and of Env polyprotein (prior to its proteolytic cleavage) is essential for their association with host cell membrane lipid rafts. Palmitoylation is therefore required for envelope trafficking to classical lipid rafts, but not for viral replication. In terms of processing, specific enzymatic cleavages in vivo yield mature proteins. Envelope glycoproteins are synthesized as an inactive precursor that is heavily N-glycosylated and processed likely by host cell furin in the Golgi to yield the mature SU and TM proteins. The cleavage site between SU and TM requires the minimal sequence [KR]-X-[KR]-R. About 2 of the 9 disulfide bonds of gp41 are reduced by P4HB/PDI, following binding to CD4 receptor.

Its subcellular location is the virion membrane. It localises to the host cell membrane. The protein resides in the host endosome membrane. Functionally, oligomerizes in the host endoplasmic reticulum into predominantly trimers. In a second time, gp160 transits in the host Golgi, where glycosylation is completed. The precursor is then proteolytically cleaved in the trans-Golgi and thereby activated by cellular furin or furin-like proteases to produce gp120 and gp41. Its function is as follows. Attaches the virus to the host lymphoid cell by binding to the primary receptor CD4. This interaction induces a structural rearrangement creating a high affinity binding site for a chemokine coreceptor like CXCR4 and/or CCR5. Acts as a ligand for CD209/DC-SIGN and CLEC4M/DC-SIGNR, which are respectively found on dendritic cells (DCs), and on endothelial cells of liver sinusoids and lymph node sinuses. These interactions allow capture of viral particles at mucosal surfaces by these cells and subsequent transmission to permissive cells. HIV subverts the migration properties of dendritic cells to gain access to CD4+ T-cells in lymph nodes. Virus transmission to permissive T-cells occurs either in trans (without DCs infection, through viral capture and transmission), or in cis (following DCs productive infection, through the usual CD4-gp120 interaction), thereby inducing a robust infection. In trans infection, bound virions remain infectious over days and it is proposed that they are not degraded, but protected in non-lysosomal acidic organelles within the DCs close to the cell membrane thus contributing to the viral infectious potential during DCs' migration from the periphery to the lymphoid tissues. On arrival at lymphoid tissues, intact virions recycle back to DCs' cell surface allowing virus transmission to CD4+ T-cells. In terms of biological role, acts as a class I viral fusion protein. Under the current model, the protein has at least 3 conformational states: pre-fusion native state, pre-hairpin intermediate state, and post-fusion hairpin state. During fusion of viral and target intracellular membranes, the coiled coil regions (heptad repeats) assume a trimer-of-hairpins structure, positioning the fusion peptide in close proximity to the C-terminal region of the ectodomain. The formation of this structure appears to drive apposition and subsequent fusion of viral and target cell membranes. Complete fusion occurs in host cell endosomes and is dynamin-dependent, however some lipid transfer might occur at the plasma membrane. The virus undergoes clathrin-dependent internalization long before endosomal fusion, thus minimizing the surface exposure of conserved viral epitopes during fusion and reducing the efficacy of inhibitors targeting these epitopes. Membranes fusion leads to delivery of the nucleocapsid into the cytoplasm. The protein is Envelope glycoprotein gp160 of Homo sapiens (Human).